The primary structure comprises 383 residues: 3-ketosteroid-9-alpha-monooxygenase, oxygenase component (383 aa).

A Rieske domain is found at 24 to 126 (WHCLGPVKNF…TDVRGGLLFV (103 aa)). Residues C65, H67, C84, and H87 each contribute to the [2Fe-2S] cluster site. The Fe cation site is built by N173, H179, H184, and D302.

Homotrimer. The two-component system 3-ketosteroid-9-alpha-monooxygenase is composed of an oxygenase component KshA and a reductase component KshB. Requires [2Fe-2S] cluster as cofactor. Fe cation serves as cofactor.

It catalyses the reaction androsta-1,4-diene-3,17-dione + 2 reduced [2Fe-2S]-[ferredoxin] + O2 + 2 H(+) = 9alpha-hydroxyandrosta-1,4-diene-3,17-dione + 2 oxidized [2Fe-2S]-[ferredoxin] + H2O. It participates in lipid metabolism; steroid biosynthesis. Functionally, involved in the degradation of cholesterol. Catalyzes the introduction of a 9a-hydroxyl moiety into 1,4-androstadiene-3,17-dione (ADD) to yield the 9alpha-hydroxy-1,4-androstadiene-3,17-dione (9OHADD) intermediate which spontaneously form 3-hydroxy-9,10-seconandrost-1,3,5(10)-triene-9,17-dione (HSA) via the meta-cleavage of ring B with concomitant aromatization of ring A. The protein is 3-ketosteroid-9-alpha-monooxygenase, oxygenase component (kshA) of Mycolicibacterium smegmatis (strain ATCC 700084 / mc(2)155) (Mycobacterium smegmatis).